A 373-amino-acid polypeptide reads, in one-letter code: 4-hydroxy-3-methylbut-2-en-1-yl diphosphate synthase (flavodoxin) (373 aa).

Cys270, Cys273, Cys305, and Glu312 together coordinate [4Fe-4S] cluster.

It belongs to the IspG family. It depends on [4Fe-4S] cluster as a cofactor.

It catalyses the reaction (2E)-4-hydroxy-3-methylbut-2-enyl diphosphate + oxidized [flavodoxin] + H2O + 2 H(+) = 2-C-methyl-D-erythritol 2,4-cyclic diphosphate + reduced [flavodoxin]. The protein operates within isoprenoid biosynthesis; isopentenyl diphosphate biosynthesis via DXP pathway; isopentenyl diphosphate from 1-deoxy-D-xylulose 5-phosphate: step 5/6. In terms of biological role, converts 2C-methyl-D-erythritol 2,4-cyclodiphosphate (ME-2,4cPP) into 1-hydroxy-2-methyl-2-(E)-butenyl 4-diphosphate. The protein is 4-hydroxy-3-methylbut-2-en-1-yl diphosphate synthase (flavodoxin) of Photorhabdus laumondii subsp. laumondii (strain DSM 15139 / CIP 105565 / TT01) (Photorhabdus luminescens subsp. laumondii).